The primary structure comprises 509 residues: Butyrophilin-like protein 1 (509 aa).

The first 27 residues, 1-27 (MMKGSPSVPPAGCLLPLLLLLFTGVSG), serve as a signal peptide directing secretion. Ig-like V-type domains are found at residues 28–139 (EVSW…QEVS) and 151–237 (PLVH…KAIL). Residues 28–250 (EVSWFSVKGP…PFFPKTCPWK (223 aa)) are Extracellular-facing. Cystine bridges form between Cys53–Cys127 and Cys167–Cys221. A helical membrane pass occupies residues 251–271 (VALVCSVLILLVLLGGISLGI). The Cytoplasmic portion of the chain corresponds to 272–509 (WKEHQVKRRE…SMGLSATAQP (238 aa)). The B30.2/SPRY domain maps to 316–509 (RKALYKEDWK…SMGLSATAQP (194 aa)). Positions 349–372 (MPDQDKTDSRTEENRGEETVSSSQ) are disordered. Basic and acidic residues predominate over residues 351 to 366 (DQDKTDSRTEENRGEE).

It belongs to the immunoglobulin superfamily. BTN/MOG family.

It localises to the membrane. The polypeptide is Butyrophilin-like protein 1 (Btnl1) (Mus musculus (Mouse)).